Here is a 76-residue protein sequence, read N- to C-terminus: Omega-conotoxin MoVIA (76 aa).

A signal peptide spans 1–22 (MKLTCVVIVAVLFLTACQLITA). Residues 23–45 (DDSRSTQRHRALRSTTKLSMSTR) constitute a propeptide that is removed on maturation. Intrachain disulfides connect Cys-46/Cys-61, Cys-53/Cys-64, and Cys-60/Cys-71. Hydroxyproline occurs at positions 49 and 55.

Belongs to the conotoxin O1 superfamily. Expressed by the venom duct.

The protein resides in the secreted. Omega-conotoxins act at presynaptic membranes, they bind and block voltage-gated calcium channels (Cav). This toxin potently blocks mammalian N-type calcium channels (Cav2.2/CACNA1B) (IC(50)=330 nM on human channels). It is 9-fold more potent in displacing radiolabeled omega-conotoxin GVIA from fish brain membranes than from human SH-SY5Y cells. Functionally, omega-conotoxins act at presynaptic membranes, they bind and block voltage-gated calcium channels (Cav). This toxin potently blocks mammalian N-type calcium channels (Cav2.2/CACNA1B) (IC(50)=600 nM on human channels). It is 60-fold more potent in displacing radiolabeled omega-conotoxin GVIA from fish brain membranes than from human SH-SY5Y cells. In vivo, when tested on rat neuropathic pain model, this toxin shows an analgesic activity. The sequence is that of Omega-conotoxin MoVIA from Conus moncuri (Sea snail).